The following is a 1368-amino-acid chain: DNA-directed RNA polymerase subunit beta (1368 aa).

It belongs to the RNA polymerase beta chain family. The RNAP catalytic core consists of 2 alpha, 1 beta, 1 beta' and 1 omega subunit. When a sigma factor is associated with the core the holoenzyme is formed, which can initiate transcription.

It carries out the reaction RNA(n) + a ribonucleoside 5'-triphosphate = RNA(n+1) + diphosphate. In terms of biological role, DNA-dependent RNA polymerase catalyzes the transcription of DNA into RNA using the four ribonucleoside triphosphates as substrates. This Cupriavidus necator (strain ATCC 17699 / DSM 428 / KCTC 22496 / NCIMB 10442 / H16 / Stanier 337) (Ralstonia eutropha) protein is DNA-directed RNA polymerase subunit beta.